The sequence spans 285 residues: 4-diphosphocytidyl-2-C-methyl-D-erythritol kinase (285 aa).

Residue lysine 12 is part of the active site. Proline 95–serine 105 serves as a coordination point for ATP. Aspartate 137 is an active-site residue.

This sequence belongs to the GHMP kinase family. IspE subfamily.

The catalysed reaction is 4-CDP-2-C-methyl-D-erythritol + ATP = 4-CDP-2-C-methyl-D-erythritol 2-phosphate + ADP + H(+). It participates in isoprenoid biosynthesis; isopentenyl diphosphate biosynthesis via DXP pathway; isopentenyl diphosphate from 1-deoxy-D-xylulose 5-phosphate: step 3/6. Functionally, catalyzes the phosphorylation of the position 2 hydroxy group of 4-diphosphocytidyl-2C-methyl-D-erythritol. This chain is 4-diphosphocytidyl-2-C-methyl-D-erythritol kinase, found in Actinobacillus pleuropneumoniae serotype 3 (strain JL03).